Here is a 119-residue protein sequence, read N- to C-terminus: Protein TusC (119 aa).

It belongs to the DsrF/TusC family. As to quaternary structure, heterohexamer, formed by a dimer of trimers. The hexameric TusBCD complex contains 2 copies each of TusB, TusC and TusD. The TusBCD complex interacts with TusE.

It is found in the cytoplasm. In terms of biological role, part of a sulfur-relay system required for 2-thiolation of 5-methylaminomethyl-2-thiouridine (mnm(5)s(2)U) at tRNA wobble positions. This chain is Protein TusC, found in Sodalis glossinidius (strain morsitans).